Reading from the N-terminus, the 283-residue chain is Pantothenate synthetase (283 aa).

An ATP-binding site is contributed by 30–37 (MGYYHSGH). The active-site Proton donor is the H37. (R)-pantoate is bound at residue Q61. Q61 lines the beta-alanine pocket. 147–150 (GQKD) is a binding site for ATP. Q153 is a binding site for (R)-pantoate. ATP is bound by residues V176 and 184–187 (MSSR).

This sequence belongs to the pantothenate synthetase family. In terms of assembly, homodimer.

The protein localises to the cytoplasm. The enzyme catalyses (R)-pantoate + beta-alanine + ATP = (R)-pantothenate + AMP + diphosphate + H(+). Its pathway is cofactor biosynthesis; (R)-pantothenate biosynthesis; (R)-pantothenate from (R)-pantoate and beta-alanine: step 1/1. Catalyzes the condensation of pantoate with beta-alanine in an ATP-dependent reaction via a pantoyl-adenylate intermediate. In Nitratidesulfovibrio vulgaris (strain DSM 19637 / Miyazaki F) (Desulfovibrio vulgaris), this protein is Pantothenate synthetase.